Consider the following 157-residue polypeptide: Protein Smg homolog (157 aa).

Belongs to the Smg family.

The protein is Protein Smg homolog of Shewanella denitrificans (strain OS217 / ATCC BAA-1090 / DSM 15013).